The sequence spans 98 residues: Co-chaperonin GroES (98 aa).

Belongs to the GroES chaperonin family. Heptamer of 7 subunits arranged in a ring. Interacts with the chaperonin GroEL.

It is found in the cytoplasm. In terms of biological role, together with the chaperonin GroEL, plays an essential role in assisting protein folding. The GroEL-GroES system forms a nano-cage that allows encapsulation of the non-native substrate proteins and provides a physical environment optimized to promote and accelerate protein folding. GroES binds to the apical surface of the GroEL ring, thereby capping the opening of the GroEL channel. The polypeptide is Co-chaperonin GroES (Corynebacterium diphtheriae (strain ATCC 700971 / NCTC 13129 / Biotype gravis)).